Here is a 230-residue protein sequence, read N- to C-terminus: 7-cyano-7-deazaguanine synthase (230 aa).

9–19 (LSGGLDSATTA) is a binding site for ATP. Positions 190, 198, 201, and 204 each coordinate Zn(2+).

It belongs to the QueC family. Zn(2+) is required as a cofactor.

The enzyme catalyses 7-carboxy-7-deazaguanine + NH4(+) + ATP = 7-cyano-7-deazaguanine + ADP + phosphate + H2O + H(+). The protein operates within purine metabolism; 7-cyano-7-deazaguanine biosynthesis. Catalyzes the ATP-dependent conversion of 7-carboxy-7-deazaguanine (CDG) to 7-cyano-7-deazaguanine (preQ(0)). The chain is 7-cyano-7-deazaguanine synthase from Microcystis aeruginosa (strain NIES-843 / IAM M-2473).